Reading from the N-terminus, the 487-residue chain is Putative beta-glucosidase 35 (487 aa).

An N-terminal signal peptide occupies residues 1-27 (MGIRMGRRLLLITLLLGALLCNNVAYA). Glutamine 48 is an a beta-D-glucoside binding site. N-linked (GlcNAc...) asparagine glycans are attached at residues asparagine 76 and asparagine 116. A beta-D-glucoside contacts are provided by residues histidine 151 and 200-201 (NE). Glutamate 201 serves as the catalytic Proton donor. Cysteine 220 and cysteine 228 are joined by a disulfide. Residue tyrosine 344 participates in a beta-D-glucoside binding. Asparagine 369 is a glycosylation site (N-linked (GlcNAc...) asparagine). A beta-D-glucoside is bound at residue glutamate 414. Residue glutamate 414 is the Nucleophile of the active site. 2 N-linked (GlcNAc...) asparagine glycosylation sites follow: asparagine 418 and asparagine 419. Phenylalanine 458 is a binding site for a beta-D-glucoside.

This sequence belongs to the glycosyl hydrolase 1 family.

The catalysed reaction is Hydrolysis of terminal, non-reducing beta-D-glucosyl residues with release of beta-D-glucose.. This chain is Putative beta-glucosidase 35 (BGLU35), found in Oryza sativa subsp. japonica (Rice).